Consider the following 1207-residue polypeptide: DNA-directed RNA polymerase subunit beta' (1207 aa).

Residues C60, C62, C75, and C78 each contribute to the Zn(2+) site. Mg(2+) contacts are provided by D450, D452, and D454. Residues C818, C892, C899, and C902 each coordinate Zn(2+).

It belongs to the RNA polymerase beta' chain family. As to quaternary structure, the RNAP catalytic core consists of 2 alpha, 1 beta, 1 beta' and 1 omega subunit. When a sigma factor is associated with the core the holoenzyme is formed, which can initiate transcription. It depends on Mg(2+) as a cofactor. Zn(2+) is required as a cofactor.

The enzyme catalyses RNA(n) + a ribonucleoside 5'-triphosphate = RNA(n+1) + diphosphate. DNA-dependent RNA polymerase catalyzes the transcription of DNA into RNA using the four ribonucleoside triphosphates as substrates. In Lactococcus lactis subsp. cremoris (strain MG1363), this protein is DNA-directed RNA polymerase subunit beta'.